The primary structure comprises 598 residues: Vacuolin-A (598 aa).

Positions 482 to 539 (IKTTEARLKAETDNIALEQRNKAIISESQAKLSSAQREAESLLITAEAQKKASELQGE) form a coiled coil.

The protein belongs to the vacuolin family.

The protein localises to the endosome membrane. The protein resides in the lysosome. The polypeptide is Vacuolin-A (vacA) (Dictyostelium discoideum (Social amoeba)).